The sequence spans 308 residues: Cytochrome b (308 aa).

A run of 4 helical transmembrane segments spans residues F1–M21, W45–I66, W81–L101, and F146–T166. Positions 51 and 65 each coordinate heme b. Heme b is bound by residues H150 and H164. A ubiquinone is bound at residue H169. Transmembrane regions (helical) follow at residues I194 to S214, L256 to H276, and L288 to S308.

The protein belongs to the cytochrome b family. The cytochrome bc1 complex contains 11 subunits: 3 respiratory subunits (MT-CYB, CYC1 and UQCRFS1), 2 core proteins (UQCRC1 and UQCRC2) and 6 low-molecular weight proteins (UQCRH/QCR6, UQCRB/QCR7, UQCRQ/QCR8, UQCR10/QCR9, UQCR11/QCR10 and a cleavage product of UQCRFS1). This cytochrome bc1 complex then forms a dimer. It depends on heme b as a cofactor.

It localises to the mitochondrion inner membrane. Component of the ubiquinol-cytochrome c reductase complex (complex III or cytochrome b-c1 complex) that is part of the mitochondrial respiratory chain. The b-c1 complex mediates electron transfer from ubiquinol to cytochrome c. Contributes to the generation of a proton gradient across the mitochondrial membrane that is then used for ATP synthesis. The sequence is that of Cytochrome b (MT-CYB) from Scytalopus magellanicus (Magellanic tapaculo).